The sequence spans 320 residues: Esterase LipI (320 aa).

Active-site residues include Ser165, Asp261, and His291.

This sequence belongs to the 'GDXG' lipolytic enzyme family.

The enzyme catalyses a fatty acid ester + H2O = an aliphatic alcohol + a fatty acid + H(+). The catalysed reaction is a butanoate ester + H2O = an aliphatic alcohol + butanoate + H(+). It carries out the reaction an octanoate ester + H2O = an aliphatic alcohol + octanoate + H(+). It catalyses the reaction decanoate ester + H2O = decanoate + an aliphatic alcohol + H(+). The enzyme catalyses an acetyl ester + H2O = an aliphatic alcohol + acetate + H(+). The catalysed reaction is a dodecanoate ester + H2O = an aliphatic alcohol + dodecanoate + H(+). Inhibited by ionic detergents SDS (anions) and CTAB (cationic). Strongly inhibited by Zn(2+). Esterase that can hydrolyze short-chain esters with the carbon chain containing 2 to 12 carbon atoms. In vitro, pNP-butyrate is the preferred substrate. This is Esterase LipI from Mycobacterium tuberculosis (strain ATCC 25618 / H37Rv).